The following is a 354-amino-acid chain: 3-isopropylmalate dehydrogenase (354 aa).

Residue 76–87 (GPRWDSAKERPE) participates in NAD(+) binding. Substrate-binding residues include arginine 94, arginine 104, arginine 130, and aspartate 215. Mg(2+) is bound by residues aspartate 215, aspartate 239, and aspartate 243. 273–285 (GSAPDIAGKNKAN) serves as a coordination point for NAD(+).

The protein belongs to the isocitrate and isopropylmalate dehydrogenases family. LeuB type 1 subfamily. In terms of assembly, homodimer. Requires Mg(2+) as cofactor. It depends on Mn(2+) as a cofactor.

The protein resides in the cytoplasm. The enzyme catalyses (2R,3S)-3-isopropylmalate + NAD(+) = 4-methyl-2-oxopentanoate + CO2 + NADH. The protein operates within amino-acid biosynthesis; L-leucine biosynthesis; L-leucine from 3-methyl-2-oxobutanoate: step 3/4. Catalyzes the oxidation of 3-carboxy-2-hydroxy-4-methylpentanoate (3-isopropylmalate) to 3-carboxy-4-methyl-2-oxopentanoate. The product decarboxylates to 4-methyl-2 oxopentanoate. The protein is 3-isopropylmalate dehydrogenase of Bacillus cereus (strain ATCC 14579 / DSM 31 / CCUG 7414 / JCM 2152 / NBRC 15305 / NCIMB 9373 / NCTC 2599 / NRRL B-3711).